The following is a 112-amino-acid chain: Large ribosomal subunit protein bL17 (112 aa).

Belongs to the bacterial ribosomal protein bL17 family. In terms of assembly, part of the 50S ribosomal subunit. Contacts protein L32.

The sequence is that of Large ribosomal subunit protein bL17 from Carboxydothermus hydrogenoformans (strain ATCC BAA-161 / DSM 6008 / Z-2901).